We begin with the raw amino-acid sequence, 350 residues long: Small ribosomal subunit biogenesis GTPase RsgA (350 aa).

A compositionally biased stretch (polar residues) spans 1–17; sequence MSKNKLSKGQQRRVNAN. The segment at 1-33 is disordered; it reads MSKNKLSKGQQRRVNANHQRRLKTSKEKPDYDD. In terms of domain architecture, CP-type G spans 104 to 273; it reads TSVLTRPDFY…VIDSPGVREF (170 aa). Residues 160-163 and 214-222 contribute to the GTP site; these read NKID and GQSGVGKSS. Residues Cys297, Cys302, His304, and Cys310 each coordinate Zn(2+).

This sequence belongs to the TRAFAC class YlqF/YawG GTPase family. RsgA subfamily. As to quaternary structure, monomer. Associates with 30S ribosomal subunit, binds 16S rRNA. The cofactor is Zn(2+).

It is found in the cytoplasm. Functionally, one of several proteins that assist in the late maturation steps of the functional core of the 30S ribosomal subunit. Helps release RbfA from mature subunits. May play a role in the assembly of ribosomal proteins into the subunit. Circularly permuted GTPase that catalyzes slow GTP hydrolysis, GTPase activity is stimulated by the 30S ribosomal subunit. The sequence is that of Small ribosomal subunit biogenesis GTPase RsgA from Escherichia coli (strain SMS-3-5 / SECEC).